Consider the following 434-residue polypeptide: Adenylosuccinate synthetase (434 aa).

Residues 22–28 and 50–52 contribute to the GTP site; these read GDEGKGK and GHT. Asp-23 (proton acceptor) is an active-site residue. Mg(2+) is bound by residues Asp-23 and Gly-50. IMP-binding positions include 23 to 26, 48 to 51, Thr-139, Arg-153, Gln-234, Thr-249, and Arg-313; these read DEGK and NAGH. His-51 (proton donor) is an active-site residue. 309–315 contacts substrate; that stretch reads ATTGRKR. GTP contacts are provided by residues Arg-315, 341–343, and 423–425; these read KLD and SVG.

This sequence belongs to the adenylosuccinate synthetase family. As to quaternary structure, homodimer. Requires Mg(2+) as cofactor.

The protein localises to the cytoplasm. The enzyme catalyses IMP + L-aspartate + GTP = N(6)-(1,2-dicarboxyethyl)-AMP + GDP + phosphate + 2 H(+). Its pathway is purine metabolism; AMP biosynthesis via de novo pathway; AMP from IMP: step 1/2. Its function is as follows. Plays an important role in the de novo pathway of purine nucleotide biosynthesis. Catalyzes the first committed step in the biosynthesis of AMP from IMP. This Chlorobium limicola (strain DSM 245 / NBRC 103803 / 6330) protein is Adenylosuccinate synthetase.